The following is a 103-amino-acid chain: Large ribosomal subunit protein uL24 (103 aa).

This sequence belongs to the universal ribosomal protein uL24 family. In terms of assembly, part of the 50S ribosomal subunit.

Functionally, one of two assembly initiator proteins, it binds directly to the 5'-end of the 23S rRNA, where it nucleates assembly of the 50S subunit. One of the proteins that surrounds the polypeptide exit tunnel on the outside of the subunit. The polypeptide is Large ribosomal subunit protein uL24 (Anoxybacillus flavithermus (strain DSM 21510 / WK1)).